The primary structure comprises 409 residues: AT-rich interactive domain-containing protein 3C (409 aa).

Over residues 1-14 (MEALQRQQAARLAQ) the composition is skewed to low complexity. The segment at 1-91 (MEALQRQQAA…SPSSQSPGIQ (91 aa)) is disordered. Over residues 19-30 (LAPPRLPLPQPP) the composition is skewed to pro residues. Over residues 49 to 70 (AEEEEGAEDEEGETPLAEEETA) the composition is skewed to acidic residues. Positions 110 to 202 (DPKRKEFLDD…YLYPYECETR (93 aa)) constitute an ARID domain. 3 disordered regions span residues 233 to 274 (NLAG…PAHA), 306 to 333 (TREK…RLGA), and 385 to 409 (PVPA…STLP). Over residues 235 to 257 (AGPTPRGAPGPASSHGPAPTATP) the composition is skewed to low complexity. Residues 301 to 386 (LASEATREKL…GILFARRQPV (86 aa)) form the REKLES domain. Residues 306-320 (TREKLAPEEPPEKRA) are compositionally biased toward basic and acidic residues. A compositionally biased stretch (pro residues) spans 393–402 (TNPPPLPSTG).

Interacts (via REKLES DOMAIN) with NPM1; the interaction mediates ARID3C nuclear shuttling.

The protein localises to the nucleus. Its function is as follows. Transcription factor involved in monocyte-to-macrophage differentiation. Forms a complex with NPM1 to translocate to the nucleus, acting as a transcription factor that promotes the expression of the genes involved in macrophage differentiation, such as STAT3, STAT1 and JUNB. The chain is AT-rich interactive domain-containing protein 3C (Arid3c) from Mus musculus (Mouse).